Consider the following 201-residue polypeptide: IDLSRF-like peptide (201 aa).

The N-terminal stretch at 1–28 is a signal peptide; sequence MVRRFCNGAVALGIALTACAAFPRAIMA. Residues 43-201 constitute a propeptide that is removed on maturation; that stretch reads SDACHPYEPF…EKLVKTGFLD (159 aa). An LDL-receptor class A domain is found at 45-85; it reads ACHPYEPFKCPGDGLCISIQYLCDGAPDCQDGYDEDSRLCT. 3 disulfides stabilise this stretch: cysteine 46–cysteine 60, cysteine 54–cysteine 73, and cysteine 67–cysteine 84.

As to expression, expressed in central brain, antennal and optical lobes, in gnathal, thoracic and abdominal ganglia and in the retrocerebral complex (at protein level).

Its subcellular location is the secreted. The chain is IDLSRF-like peptide from Camponotus floridanus (Florida carpenter ant).